Here is a 144-residue protein sequence, read N- to C-terminus: UPF0735 ACT domain-containing protein LSEI_1046 (144 aa).

The region spanning 68–143 (VISLMLHHDR…GVSDVHLVSV (76 aa)) is the ACT domain.

Belongs to the UPF0735 family.

The polypeptide is UPF0735 ACT domain-containing protein LSEI_1046 (Lacticaseibacillus paracasei (strain ATCC 334 / BCRC 17002 / CCUG 31169 / CIP 107868 / KCTC 3260 / NRRL B-441) (Lactobacillus paracasei)).